The following is an 83-amino-acid chain: Mu-theraphotoxin-Hhn2b 1 (83 aa).

The first 21 residues, 1–21 (MKASMFLALAGLVLLFVVCYA), serve as a signal peptide directing secretion. Residues 22–48 (SESEEKEFPRELISKIFAVDDFKGEER) constitute a propeptide that is removed on maturation. Intrachain disulfides connect C50-C65, C57-C70, and C64-C77. Leucine amide is present on L81.

This sequence belongs to the neurotoxin 10 (Hwtx-1) family. 14 (Hntx-1) subfamily. As to quaternary structure, monomer. As to expression, expressed by the venom gland.

The protein localises to the secreted. Its function is as follows. Weakly blocks the rat SCN2A/SCN1B (Nav1.2/beta-1) sodium channel (IC(50)=68 uM) and the insect sodium channel para/tipE (IC(50)=4.3 uM), without altering the activation or inactivation kinetics (depressant toxin). This Cyriopagopus hainanus (Chinese bird spider) protein is Mu-theraphotoxin-Hhn2b 1.